Reading from the N-terminus, the 252-residue chain is 5'-nucleotidase SurE (252 aa).

Aspartate 8, aspartate 9, serine 40, and asparagine 93 together coordinate a divalent metal cation.

This sequence belongs to the SurE nucleotidase family. It depends on a divalent metal cation as a cofactor.

The protein resides in the cytoplasm. The enzyme catalyses a ribonucleoside 5'-phosphate + H2O = a ribonucleoside + phosphate. Functionally, nucleotidase that shows phosphatase activity on nucleoside 5'-monophosphates. This is 5'-nucleotidase SurE from Methylocella silvestris (strain DSM 15510 / CIP 108128 / LMG 27833 / NCIMB 13906 / BL2).